Consider the following 141-residue polypeptide: Large-conductance mechanosensitive channel (141 aa).

3 helical membrane-spanning segments follow: residues 17-37 (MDLA…ASIV), 40-60 (LIMP…LFIA), and 86-106 (GNFV…FIIV).

This sequence belongs to the MscL family. As to quaternary structure, homopentamer.

Its subcellular location is the cell inner membrane. Its function is as follows. Channel that opens in response to stretch forces in the membrane lipid bilayer. May participate in the regulation of osmotic pressure changes within the cell. The polypeptide is Large-conductance mechanosensitive channel (Thiobacillus denitrificans (strain ATCC 25259 / T1)).